Consider the following 87-residue polypeptide: Cell division topological specificity factor (87 aa).

The protein belongs to the MinE family.

Its function is as follows. Prevents the cell division inhibition by proteins MinC and MinD at internal division sites while permitting inhibition at polar sites. This ensures cell division at the proper site by restricting the formation of a division septum at the midpoint of the long axis of the cell. This is Cell division topological specificity factor from Chelativorans sp. (strain BNC1).